We begin with the raw amino-acid sequence, 749 residues long: 1,4-alpha-glucan branching enzyme GlgB (749 aa).

The active-site Nucleophile is the D427. Residue E480 is the Proton donor of the active site.

Belongs to the glycosyl hydrolase 13 family. GlgB subfamily. In terms of assembly, monomer.

The catalysed reaction is Transfers a segment of a (1-&gt;4)-alpha-D-glucan chain to a primary hydroxy group in a similar glucan chain.. It functions in the pathway glycan biosynthesis; glycogen biosynthesis. Catalyzes the formation of the alpha-1,6-glucosidic linkages in glycogen by scission of a 1,4-alpha-linked oligosaccharide from growing alpha-1,4-glucan chains and the subsequent attachment of the oligosaccharide to the alpha-1,6 position. The chain is 1,4-alpha-glucan branching enzyme GlgB from Thermobifida fusca (strain YX).